A 485-amino-acid chain; its full sequence is Forkhead box protein N3 (485 aa).

The tract at residues 1–21 (MGPVMPPSKKPESPGISVSSG) is disordered. Residues S83, S85, and S97 each carry the phosphoserine modification. The disordered stretch occupies residues 86-108 (PVQDLDDDTPPSPAHSDMPYDAR). The segment at residues 114 to 210 (KPPYSFSCLI…QALKKTPYHS (97 aa)) is a DNA-binding region (fork-head). The tract at residues 315–454 (RTESEPSCGS…DEEMKEAAGS (140 aa)) is disordered. Low complexity predominate over residues 338 to 359 (SSAKSSHARSTSPASDCVSSSS). Basic and acidic residues predominate over residues 382-404 (HESHSETEEDDRKCSPKEAKDAL). Over residues 412 to 424 (QHKKRQHFAKARK) the composition is skewed to basic residues. The residue at position 443 (S443) is a Phosphoserine.

In terms of assembly, interacts through its C-terminus with the C-terminus of SNW1/SKIP.

It localises to the nucleus. In terms of biological role, acts as a transcriptional repressor. May be involved in DNA damage-inducible cell cycle arrests (checkpoints). This Sus scrofa (Pig) protein is Forkhead box protein N3 (FOXN3).